The chain runs to 65 residues: U15-hexatoxin-Mg1b (65 aa).

Post-translationally, contains 4 disulfide bonds. In terms of tissue distribution, expressed by the venom gland.

It is found in the secreted. In vivo, intrathorax injection into crickets causes death. The polypeptide is U15-hexatoxin-Mg1b (Macrothele gigas (Japanese funnel web spider)).